The chain runs to 440 residues: D-serine dehydratase (440 aa).

N6-(pyridoxal phosphate)lysine is present on lysine 116.

Belongs to the serine/threonine dehydratase family. DsdA subfamily. As to quaternary structure, monomer. Pyridoxal 5'-phosphate is required as a cofactor.

The enzyme catalyses D-serine = pyruvate + NH4(+). This is D-serine dehydratase from Salmonella dublin (strain CT_02021853).